The primary structure comprises 1097 residues: DNA-directed RNA polymerase subunit beta (1097 aa).

Residues 1073–1097 (DVNPRRSTPSRPTYESLGVADYDED) are disordered.

Belongs to the RNA polymerase beta chain family. In cyanobacteria the RNAP catalytic core is composed of 2 alpha, 1 beta, 1 beta', 1 gamma and 1 omega subunit. When a sigma factor is associated with the core the holoenzyme is formed, which can initiate transcription.

It catalyses the reaction RNA(n) + a ribonucleoside 5'-triphosphate = RNA(n+1) + diphosphate. In terms of biological role, DNA-dependent RNA polymerase catalyzes the transcription of DNA into RNA using the four ribonucleoside triphosphates as substrates. The chain is DNA-directed RNA polymerase subunit beta from Synechococcus sp. (strain CC9311).